Reading from the N-terminus, the 71-residue chain is uncharacterized protein (71 aa).

A Sm domain is found at 15–71 (PNFEYARRLNGKKVKIFLRNGEVLDAEVTGVSNYEIMVKVGDRNLLVFKHAIDYIEY).

This is an uncharacterized protein from Methanocaldococcus jannaschii (strain ATCC 43067 / DSM 2661 / JAL-1 / JCM 10045 / NBRC 100440) (Methanococcus jannaschii).